Consider the following 364-residue polypeptide: 3-dehydroquinate synthase (364 aa).

NAD(+) contacts are provided by residues 71–76 (DGEQYK), 105–109 (GVIGD), 129–130 (TT), Lys142, Lys151, and 169–172 (CLKT). Zn(2+)-binding residues include Glu184, His247, and His264.

It belongs to the sugar phosphate cyclases superfamily. Dehydroquinate synthase family. Co(2+) is required as a cofactor. Requires Zn(2+) as cofactor. NAD(+) serves as cofactor.

The protein localises to the cytoplasm. It catalyses the reaction 7-phospho-2-dehydro-3-deoxy-D-arabino-heptonate = 3-dehydroquinate + phosphate. Its pathway is metabolic intermediate biosynthesis; chorismate biosynthesis; chorismate from D-erythrose 4-phosphate and phosphoenolpyruvate: step 2/7. In terms of biological role, catalyzes the conversion of 3-deoxy-D-arabino-heptulosonate 7-phosphate (DAHP) to dehydroquinate (DHQ). The protein is 3-dehydroquinate synthase of Klebsiella pneumoniae (strain 342).